Consider the following 249-residue polypeptide: 5'-nucleotidase SurE (249 aa).

Residues Asp8, Asp9, Ser39, and Asn91 each contribute to the a divalent metal cation site.

The protein belongs to the SurE nucleotidase family. It depends on a divalent metal cation as a cofactor.

The protein resides in the cytoplasm. It catalyses the reaction a ribonucleoside 5'-phosphate + H2O = a ribonucleoside + phosphate. In terms of biological role, nucleotidase that shows phosphatase activity on nucleoside 5'-monophosphates. The protein is 5'-nucleotidase SurE of Haemophilus influenzae (strain 86-028NP).